The primary structure comprises 197 residues: Large ribosomal subunit protein bL25 (197 aa).

This sequence belongs to the bacterial ribosomal protein bL25 family. CTC subfamily. In terms of assembly, part of the 50S ribosomal subunit; part of the 5S rRNA/L5/L18/L25 subcomplex. Contacts the 5S rRNA. Binds to the 5S rRNA independently of L5 and L18.

This is one of the proteins that binds to the 5S RNA in the ribosome where it forms part of the central protuberance. This Carboxydothermus hydrogenoformans (strain ATCC BAA-161 / DSM 6008 / Z-2901) protein is Large ribosomal subunit protein bL25.